The sequence spans 92 residues: ATP synthase subunit c (92 aa).

The next 2 membrane-spanning stretches (helical) occupy residues 20 to 40 and 71 to 91; these read GAGL…GTGL and MAIS…LVFV.

Belongs to the ATPase C chain family. In terms of assembly, F-type ATPases have 2 components, F(1) - the catalytic core - and F(0) - the membrane proton channel. F(1) has five subunits: alpha(3), beta(3), gamma(1), delta(1), epsilon(1). F(0) has three main subunits: a(1), b(2) and c(10-14). The alpha and beta chains form an alternating ring which encloses part of the gamma chain. F(1) is attached to F(0) by a central stalk formed by the gamma and epsilon chains, while a peripheral stalk is formed by the delta and b chains.

Its subcellular location is the cell membrane. Functionally, f(1)F(0) ATP synthase produces ATP from ADP in the presence of a proton or sodium gradient. F-type ATPases consist of two structural domains, F(1) containing the extramembraneous catalytic core and F(0) containing the membrane proton channel, linked together by a central stalk and a peripheral stalk. During catalysis, ATP synthesis in the catalytic domain of F(1) is coupled via a rotary mechanism of the central stalk subunits to proton translocation. Key component of the F(0) channel; it plays a direct role in translocation across the membrane. A homomeric c-ring of between 10-14 subunits forms the central stalk rotor element with the F(1) delta and epsilon subunits. The sequence is that of ATP synthase subunit c from Mycoplasmopsis pulmonis (strain UAB CTIP) (Mycoplasma pulmonis).